The sequence spans 969 residues: Translation initiation factor IF-2 (969 aa).

Residues 96–377 (KRDPAEPVRA…NSRNQHQDRR (282 aa)) are disordered. Low complexity-rich tracts occupy residues 105 to 157 (AEPA…QAEP), 167 to 181 (AAPA…EPAK), and 216 to 252 (PSAP…PAAP). Positions 253 to 264 (DRAREEARRAAE) are enriched in basic and acidic residues. A compositionally biased stretch (gly residues) spans 357–366 (RAGGKGGRGG). Residues 470 to 637 (PRAPVVTVMG…NVLLQAEILE (168 aa)) form the tr-type G domain. Residues 479–486 (GHVDHGKT) form a G1 region. 479-486 (GHVDHGKT) is a binding site for GTP. Residues 504 to 508 (GITQH) are G2. Residues 525–528 (DTPG) are G3. GTP-binding positions include 525–529 (DTPGH) and 579–582 (NKID). The tract at residues 579–582 (NKID) is G4. Residues 615 to 617 (SAK) are G5.

It belongs to the TRAFAC class translation factor GTPase superfamily. Classic translation factor GTPase family. IF-2 subfamily.

The protein resides in the cytoplasm. In terms of biological role, one of the essential components for the initiation of protein synthesis. Protects formylmethionyl-tRNA from spontaneous hydrolysis and promotes its binding to the 30S ribosomal subunits. Also involved in the hydrolysis of GTP during the formation of the 70S ribosomal complex. In Bordetella parapertussis (strain 12822 / ATCC BAA-587 / NCTC 13253), this protein is Translation initiation factor IF-2.